Reading from the N-terminus, the 160-residue chain is MKISILYSSKTGKTERVAKLIEEGVKRSGNIEVKTMNLDAVDKKFLQESEGIIFGTPTYYANISWEMKKWIDESSEFNLEGKLGAAFSTANSIAGGSDIALLTILNHLMVKGMLVYSGGVAFGKPKTHLGYVHINEIQENEDENARIFGERIANKVKQIF.

A Flavodoxin-like domain is found at 3–153 (ISILYSSKTG…NARIFGERIA (151 aa)).

Belongs to the flavodoxin family. It depends on FMN as a cofactor.

Functionally, low-potential electron donor to a number of redox enzymes. The polypeptide is Flavodoxin (floX) (Clostridium saccharobutylicum).